Reading from the N-terminus, the 98-residue chain is DNA-directed RNA polymerase subunit omega (98 aa).

This sequence belongs to the RNA polymerase subunit omega family. The RNAP catalytic core consists of 2 alpha, 1 beta, 1 beta' and 1 omega subunit. When a sigma factor is associated with the core the holoenzyme is formed, which can initiate transcription.

It carries out the reaction RNA(n) + a ribonucleoside 5'-triphosphate = RNA(n+1) + diphosphate. Functionally, promotes RNA polymerase assembly. Latches the N- and C-terminal regions of the beta' subunit thereby facilitating its interaction with the beta and alpha subunits. The protein is DNA-directed RNA polymerase subunit omega of Tropheryma whipplei (strain Twist) (Whipple's bacillus).